The primary structure comprises 459 residues: Proton-coupled folate transporter (459 aa).

Met1 is subject to N-acetylmethionine. Residues 1-25 (MEGRVSPVGSSHRLLTAAVLFRGPV) are Cytoplasmic-facing. Position 6 is a phosphoserine (Ser6). A helical transmembrane segment spans residues 26–44 (EPLVFLANFALVLQGPLTT). Residues 45 to 82 (QYIWHRISTELGYNGTRHRENCGNQSADPVLKEVETLT) lie on the Extracellular side of the membrane. Asn58 and Asn68 each carry an N-linked (GlcNAc...) asparagine glycan. Cys66 and Cys298 are joined by a disulfide. A helical transmembrane segment spans residues 83–108 (SHWTLYMNVGGFLVGLFWSTLLGAWS). The Cytoplasmic segment spans residues 109-112 (DRVG). A helical membrane pass occupies residues 113-135 (RRPLLVLASLGLLLQAVVSIFVV). The Extracellular portion of the chain corresponds to 136 to 140 (QLQLH). Residues 141-154 (IGFFVLGRALCALL) traverse the membrane as a helical segment. Over 155 to 177 (GDFNGLLAASFASVADVSSNHSR) the chain is Cytoplasmic. H(+) is bound by residues Asp156 and Glu185. A helical transmembrane segment spans residues 178–203 (TFRMALLEACIGVAGTLASLLGGHWL). Residues 204–208 (RAQGY) lie on the Extracellular side of the membrane. The helical transmembrane segment at 209–227 (ANPFWLALAVLIVMTLYAA) threads the bilayer. Topologically, residues 228 to 266 (FCFGETVKEPKSTRLFTLRHHRSIVQLYVVPAPEKSRMH) are cytoplasmic. Residues 267–289 (LALYSLAIFVVVTVHFGAQDILT) form a helical membrane-spanning segment. His281 contributes to the H(+) binding site. Residues 290–302 (LYELSTPLCWDSK) are Extracellular-facing. A helical transmembrane segment spans residues 303–325 (LIGYGSAAQHLPYLTSLLGLRLL). The Cytoplasmic segment spans residues 326-331 (QFCLAD). The chain crosses the membrane as a helical span at residues 332 to 351 (TWVAEIGLAFNILGMVVFAF). Topologically, residues 352–355 (ATIT) are extracellular. The helical transmembrane segment at 356-376 (PLMFTGYGLLFLSLVTTPVIR) threads the bilayer. The Cytoplasmic portion of the chain corresponds to 377 to 388 (AKLSKLVSESEQ). Residues 389–414 (GALFSAVACVNSLAMLMASGIFNSLY) form a helical membrane-spanning segment. The Extracellular segment spans residues 415 to 422 (PATLNFMK). Residues 423-441 (GFPFLLGAGLLFIPAILIG) traverse the membrane as a helical segment. Over 442–459 (VLEKVNPHPEFQQFPQNS) the chain is Cytoplasmic.

Belongs to the major facilitator superfamily. SLC46A family. As to quaternary structure, monomer. In terms of tissue distribution, expressed almost exclusively in the small intestine: expressed at high level in the upper half of the small intestine (duodenum and jejunum), expression decreases downwardly in the subsequent quarter and is undetectable in the last quarter (the lowest ileum). Expressed at low level in other tissues, including liver.

It is found in the cell membrane. It localises to the apical cell membrane. The protein resides in the basolateral cell membrane. Its subcellular location is the endosome membrane. The protein localises to the cytoplasm. The catalysed reaction is folate(in) + H(+)(in) = folate(out) + H(+)(out). The enzyme catalyses (6S)-5-methyl-5,6,7,8-tetrahydrofolate(in) + H(+)(in) = (6S)-5-methyl-5,6,7,8-tetrahydrofolate(out) + H(+)(out). It carries out the reaction methotrexate(in) + H(+)(in) = methotrexate(out) + H(+)(out). It catalyses the reaction pemetrexed(in) + H(+)(in) = pemetrexed(out) + H(+)(out). With respect to regulation, in contrast to human ortholog, not inhibited by myricetin. In terms of biological role, proton-coupled folate symporter that mediates folate absorption using an H(+) gradient as a driving force. Involved in the intestinal absorption of folates at the brush-border membrane of the proximal jejunum, and the transport from blood to cerebrospinal fluid across the choroid plexus. Functions at acidic pH via alternate outward- and inward-open conformation states. Protonation of residues in the outward open state primes the protein for transport. Binding of folate promotes breaking of salt bridge network and subsequent closure of the extracellular gate, leading to the inward-open state and release of protons and folate. Also able to transport antifolate drugs, such as methotrexate and pemetrexed. Involved in FOLR1-mediated endocytosis by serving as a route of export of folates from acidified endosomes. Also acts as a lower-affinity, pH-independent heme carrier protein and constitutes the main importer of heme in the intestine. Imports heme in the retina and retinal pigment epithelium, in neurons of the hippocampus, in hepatocytes and in the renal epithelial cells. Hence, participates in the trafficking of heme and increases intracellular iron content. The protein is Proton-coupled folate transporter of Rattus norvegicus (Rat).